A 204-amino-acid polypeptide reads, in one-letter code: Recombination protein RecR (204 aa).

The C4-type zinc-finger motif lies at 63–78 (CRICFNVADSELCPIC). The Toprim domain occupies 86-181 (NKICVVEQPQ…KVTRLARGLP (96 aa)).

The protein belongs to the RecR family.

May play a role in DNA repair. It seems to be involved in an RecBC-independent recombinational process of DNA repair. It may act with RecF and RecO. In Dehalococcoides mccartyi (strain ATCC BAA-2266 / KCTC 15142 / 195) (Dehalococcoides ethenogenes (strain 195)), this protein is Recombination protein RecR.